The following is a 59-amino-acid chain: UPF0509 protein KPK_3153 (59 aa).

This sequence belongs to the UPF0509 family.

The sequence is that of UPF0509 protein KPK_3153 from Klebsiella pneumoniae (strain 342).